A 228-amino-acid polypeptide reads, in one-letter code: Ribose-5-phosphate isomerase A (228 aa).

Substrate contacts are provided by residues 29–32 (TGST), 84–87 (DGAD), and 97–100 (KGGG). Glu-106 functions as the Proton acceptor in the catalytic mechanism. Residue Lys-124 participates in substrate binding.

This sequence belongs to the ribose 5-phosphate isomerase family. As to quaternary structure, homodimer.

The enzyme catalyses aldehydo-D-ribose 5-phosphate = D-ribulose 5-phosphate. It participates in carbohydrate degradation; pentose phosphate pathway; D-ribose 5-phosphate from D-ribulose 5-phosphate (non-oxidative stage): step 1/1. In terms of biological role, catalyzes the reversible conversion of ribose-5-phosphate to ribulose 5-phosphate. The protein is Ribose-5-phosphate isomerase A of Sphingopyxis alaskensis (strain DSM 13593 / LMG 18877 / RB2256) (Sphingomonas alaskensis).